A 309-amino-acid chain; its full sequence is Olfactory receptor 7A40 (309 aa).

The Extracellular segment spans residues 1 to 26 (MELKNDTQISKFILLGISEDPLWQPF). Asparagine 5 carries N-linked (GlcNAc...) asparagine glycosylation. A helical membrane pass occupies residues 27 to 47 (LFGLFLFMYLVTLLGNLLIII). Topologically, residues 48 to 57 (ATITDSHLHT) are cytoplasmic. The helical transmembrane segment at 58-78 (PMYFFLSNLSFADICFTSASI) threads the bilayer. Residues 79–97 (PKMLVNIQTKNKVITYEGC) are Extracellular-facing. Cysteine 97 and cysteine 179 are disulfide-bonded. A helical membrane pass occupies residues 98-118 (ISQVFFFILFGVLDNFLLAVM). The Cytoplasmic portion of the chain corresponds to 119–139 (AYDRYVAICHPLHYMVIMNCR). A helical transmembrane segment spans residues 140–160 (LCGFLVLGSWVTTALNSLLQS). Over 161–196 (SMALRLSFCTDLKIPHFVCELNQLVLLACNDTFPND) the chain is Extracellular. The chain crosses the membrane as a helical span at residues 197–217 (MVMYFAAILLGGGPLAGILYS). The Cytoplasmic segment spans residues 218 to 244 (YSKIVSSIRAISSSQGKYKAFSTCASH). The helical transmembrane segment at 245 to 265 (LSVVSLFYSTLLGVYLSSSFT) threads the bilayer. The Extracellular segment spans residues 266–269 (QNSH). The chain crosses the membrane as a helical span at residues 270 to 292 (STARASVMYSVVTPMLNPFIYSL). Residues 293–309 (RNKDLMGALRRLLRRKS) are Cytoplasmic-facing.

It belongs to the G-protein coupled receptor 1 family.

The protein resides in the cell membrane. In terms of biological role, odorant receptor. This is Olfactory receptor 7A40 from Mus musculus (Mouse).